We begin with the raw amino-acid sequence, 1319 residues long: ERAD-associated E3 ubiquitin-protein ligase DOA10 (1319 aa).

Methionine 1 is modified (N-acetylmethionine). At 1–131 the chain is on the cytoplasmic side; it reads MDVDSDVNVS…LTFFEKARLA (131 aa). The RING-CH-type zinc finger occupies 31–100; it reads DDAPSGATCR…DICHYPIQFK (70 aa). 8 residues coordinate Zn(2+): cysteine 39, cysteine 42, cysteine 56, cysteine 58, histidine 66, cysteine 69, cysteine 90, and cysteine 93. The helical transmembrane segment at 132 to 152 threads the bilayer; the sequence is LTIGLAAVLYIIGVPLVWNMF. At 153-203 the chain is on the lumenal side; the sequence is GKLYTMMLDGSSPYPGDFLKSLIYGYDQSATPELTTRAIFYQLLQNHSFTS. Residues 204 to 224 form a helical membrane-spanning segment; the sequence is LQFIMIVILHIALYFQYDMIV. Over 225–468 the chain is Cytoplasmic; sequence REDVFSKMVF…GPLVINLKLK (244 aa). Residues 291-306 show a composition bias toward low complexity; it reads ADNNNNVINPRNDNVP. Disordered stretches follow at residues 291 to 315 and 329 to 381; these read ADNN…DHRN and EATE…EADY. A helical transmembrane segment spans residues 469–489; the sequence is LLNVIAYFIIAVVFTAIYLAI. Residues 490–491 lie on the Lumenal side of the membrane; that stretch reads SY. The helical transmembrane segment at 492 to 512 threads the bilayer; it reads LFPTFIGFGLLKIYFGIFKVI. Residues 513–626 lie on the Cytoplasmic side of the membrane; that stretch reads LRGLCHLYYL…LFALKCTFKV (114 aa). A helical transmembrane segment spans residues 627-647; sequence FTLFFIELAGFPILAGVMLDF. The Lumenal portion of the chain corresponds to 648–660; that stretch reads SLFCPILASNSRM. The chain crosses the membrane as a helical span at residues 661-681; that stretch reads LWVPSICAIWPPFSLFVYWTI. The Cytoplasmic segment spans residues 682-739; that stretch reads GTLYMYWFAKYIGMIRKNIIRPGVLFFIRSPEDPNIKILHDSLIHPMSIQLSRLCLSM. The chain crosses the membrane as a helical span at residues 740 to 760; that stretch reads FIYAIFIVLGFGFHTRIFFPF. At 761-777 the chain is on the lumenal side; sequence MLKSNLLSVPEAYKPTS. Residues 778-797 form a helical membrane-spanning segment; it reads IISWKFNTILLTLYFTKRIL. The Cytoplasmic portion of the chain corresponds to 798–965; sequence ESSSYVKPLL…YVPPDFRLRY (168 aa). The helical transmembrane segment at 966–986 threads the bilayer; it reads MTLLGLVWLFASILMLGVTFI. Residues 987–1019 are Lumenal-facing; the sequence is SQALINFVCSFGFLPVVKLLLGERNKVYVAWKE. Residues 1020–1040 form a helical membrane-spanning segment; that stretch reads LSDISYSYLNIYYVCVGSVCL. Residues 1041 to 1113 are Cytoplasmic-facing; the sequence is SKIAKDILHF…IFDSMLVKYN (73 aa). Residues 1114–1134 traverse the membrane as a helical segment; that stretch reads LMVFIAIMIAVIRTMVSWVVL. Residues 1135 to 1168 are Lumenal-facing; that stretch reads TDGILACYNYLTIRVFGNSSYTIGNSKWFKYDES. The chain crosses the membrane as a helical span at residues 1169–1189; that stretch reads LLFVVWIISSMVNFGTGYKSL. Over 1190-1213 the chain is Cytoplasmic; it reads KLFFRNRNTSKLNFLKTMALELFK. Residues 1214-1234 traverse the membrane as a helical segment; it reads QGFLHMVIYVLPIIILSLVFL. The Lumenal segment spans residues 1235 to 1270; that stretch reads RDVSTKQIIDISHGSRSFTLSLNESFPTWTRMQDIY. Residues 1271–1291 form a helical membrane-spanning segment; sequence FGLLIALESFTFFFQATVLFI. Over 1292–1319 the chain is Cytoplasmic; it reads QWFKSTVQNVKDEVYTKGRALENLPDES.

This sequence belongs to the DOA10/MARCH6 family. As to quaternary structure, component of the DOA10 ubiquitin ligase complex which contains E3 ligase SSM4/DOA10 and CDC48-binding protein UBX2/SEL1. The DOA10 complex interacts with the heterotrimeric CDC48-NPL4-UFD1 ATPase complex which is recruited by UBX2/SEL1 via its interaction with CDC48. Interacts with its associated ubiquitin conjugating enzymes UBC6 and UBC7 with its membrane anchor CUE1. Interacts with PEX29.

It is found in the endoplasmic reticulum membrane. The protein resides in the nucleus inner membrane. The catalysed reaction is S-ubiquitinyl-[E2 ubiquitin-conjugating enzyme]-L-cysteine + [acceptor protein]-L-lysine = [E2 ubiquitin-conjugating enzyme]-L-cysteine + N(6)-ubiquitinyl-[acceptor protein]-L-lysine.. Its pathway is protein modification; protein ubiquitination. Its function is as follows. E3 ubiquitin-protein ligase which accepts ubiquitin specifically from endoplasmic reticulum-associated UBC6 and UBC7 E2 ligases, and transfers it to substrates promoting their degradation. Mediates the degradation of a broad range of substrates, including endoplasmic reticulum membrane proteins (ERQC), soluble nuclear proteins and soluble cytoplasmic proteins (CytoQC). Component of the DOA10 ubiquitin ligase complex, which is part of the ERAD-C pathway responsible for the rapid degradation of membrane proteins with misfolded cytoplasmic domains. ERAD-C substrates are ubiquitinated through DOA10 in conjunction with the E2 ubiquitin-conjugating enzymes UBC6 and UBC7-CUE1. Ubiquitinated substrates are then removed to the cytosol via the action of the UFD1-NPL4-CDC48/p97 (UNC) AAA ATPase complex and targeted to the proteasome. Also recognizes the N-terminally acetylated residue of proteins as degradation signal (degron). N-terminally acetylated target proteins include MATALPHA2, TBF1, SLK19, YMR090W, HIS3, HSP104, UBP6 and ARO8. Catalyzes ubiquitination of mislocalized tail-anchored proteins that are extracted from the mitochondrion membrane by MSP1: following extraction, mistargeted proteins are transferred to the endoplasmic reticulum, where they are ubiquitinated by DOA10 and degraded by the proteasome. This Saccharomyces cerevisiae (strain ATCC 204508 / S288c) (Baker's yeast) protein is ERAD-associated E3 ubiquitin-protein ligase DOA10 (SSM4).